The primary structure comprises 265 residues: Homeobox protein engrailed-2-A (265 aa).

Basic and acidic residues-rich tracts occupy residues 1 to 12 (MEENEQNNREVE) and 102 to 115 (GEKK…ETLK). Disordered regions lie at residues 1 to 38 (MEEN…QPHH), 75 to 140 (LSGA…KATQ), and 156 to 181 (DRPS…RPRT). The segment covering 122-136 (DHSLSSDSDSSQTSS) has biased composition (low complexity). The segment at residues 176–235 (DKRPRTAFTADQLQRLKAEFQTNRYLTEQRRQSLAQELSLNESQIKIWFQNKRAKIKKAT) is a DNA-binding region (homeobox).

This sequence belongs to the engrailed homeobox family.

It localises to the nucleus. The sequence is that of Homeobox protein engrailed-2-A (en2-a) from Xenopus laevis (African clawed frog).